The chain runs to 516 residues: Cytochrome P450 1A1 (516 aa).

The segment at 33 to 44 (WQPRVPKGLKSP) is mitochondrial targeting signal. O-linked (GlcNAc) serine glycosylation is present at Ser71. Residue Phe228 participates in substrate binding. Cys461 is a binding site for heme.

The protein belongs to the cytochrome P450 family. Interacts with cytosolic chaperones HSP70 and HSP90; this interaction is required for initial targeting to mitochondria. Interacts (via mitochondrial targeting signal) with TOMM40 (via N-terminus); this interaction is required for translocation across the mitochondrial outer membrane. Heme is required as a cofactor.

It is found in the endoplasmic reticulum membrane. The protein localises to the mitochondrion inner membrane. Its subcellular location is the microsome membrane. It localises to the cytoplasm. The enzyme catalyses an organic molecule + reduced [NADPH--hemoprotein reductase] + O2 = an alcohol + oxidized [NADPH--hemoprotein reductase] + H2O + H(+). It catalyses the reaction estrone + reduced [NADPH--hemoprotein reductase] + O2 = 2-hydroxyestrone + oxidized [NADPH--hemoprotein reductase] + H2O + H(+). The catalysed reaction is estrone + reduced [NADPH--hemoprotein reductase] + O2 = 4-hydroxyestrone + oxidized [NADPH--hemoprotein reductase] + H2O + H(+). It carries out the reaction estrone + reduced [NADPH--hemoprotein reductase] + O2 = 6alpha-hydroxyestrone + oxidized [NADPH--hemoprotein reductase] + H2O + H(+). The enzyme catalyses estrone + reduced [NADPH--hemoprotein reductase] + O2 = 15alpha-hydroxyestrone + oxidized [NADPH--hemoprotein reductase] + H2O + H(+). It catalyses the reaction estrone + reduced [NADPH--hemoprotein reductase] + O2 = 16alpha-hydroxyestrone + oxidized [NADPH--hemoprotein reductase] + H2O + H(+). The catalysed reaction is 17beta-estradiol + reduced [NADPH--hemoprotein reductase] + O2 = 2-hydroxy-17beta-estradiol + oxidized [NADPH--hemoprotein reductase] + H2O + H(+). It carries out the reaction 17beta-estradiol + reduced [NADPH--hemoprotein reductase] + O2 = 4-hydroxy-17beta-estradiol + oxidized [NADPH--hemoprotein reductase] + H2O + H(+). The enzyme catalyses 17beta-estradiol + reduced [NADPH--hemoprotein reductase] + O2 = 6alpha-hydroxy-17beta-estradiol + oxidized [NADPH--hemoprotein reductase] + H2O + H(+). It catalyses the reaction 17beta-estradiol + reduced [NADPH--hemoprotein reductase] + O2 = 7alpha-hydroxy-17beta-estradiol + oxidized [NADPH--hemoprotein reductase] + H2O + H(+). The catalysed reaction is 17beta-estradiol + reduced [NADPH--hemoprotein reductase] + O2 = 15alpha-hydroxy-17beta-estradiol + oxidized [NADPH--hemoprotein reductase] + H2O + H(+). It carries out the reaction (5Z,8Z,11Z)-eicosatrienoate + reduced [NADPH--hemoprotein reductase] + O2 = 19-hydroxy-(5Z,8Z,11Z)-eicosatrienoate + oxidized [NADPH--hemoprotein reductase] + H2O + H(+). The enzyme catalyses (5Z,8Z,11Z,14Z)-eicosatetraenoate + reduced [NADPH--hemoprotein reductase] + O2 = 16-hydroxy-(5Z,8Z,11Z,14Z)-eicosatetraenoate + oxidized [NADPH--hemoprotein reductase] + H2O + H(+). It catalyses the reaction (5Z,8Z,11Z,14Z)-eicosatetraenoate + reduced [NADPH--hemoprotein reductase] + O2 = 17-hydroxy-(5Z,8Z,11Z,14Z)-eicosatetraenoate + oxidized [NADPH--hemoprotein reductase] + H2O + H(+). The catalysed reaction is (5Z,8Z,11Z,14Z)-eicosatetraenoate + reduced [NADPH--hemoprotein reductase] + O2 = 18-hydroxy-(5Z,8Z,11Z,14Z)-eicosatetraenoate + oxidized [NADPH--hemoprotein reductase] + H2O + H(+). It carries out the reaction (5Z,8Z,11Z,14Z)-eicosatetraenoate + reduced [NADPH--hemoprotein reductase] + O2 = 19-hydroxy-(5Z,8Z,11Z,14Z)-eicosatetraenoate + oxidized [NADPH--hemoprotein reductase] + H2O + H(+). The enzyme catalyses (5Z,8Z,11Z,14Z,17Z)-eicosapentaenoate + reduced [NADPH--hemoprotein reductase] + O2 = 19-hydroxy-(5Z,8Z,11Z,14Z,17Z)-eicosapentaenoate + oxidized [NADPH--hemoprotein reductase] + H2O + H(+). It catalyses the reaction (5Z,8Z,11Z,14Z)-eicosatetraenoate + reduced [NADPH--hemoprotein reductase] + O2 = (8R,9S)-epoxy-(5Z,11Z,14Z)-eicosatrienoate + oxidized [NADPH--hemoprotein reductase] + H2O + H(+). The catalysed reaction is (5Z,8Z,11Z,14Z)-eicosatetraenoate + reduced [NADPH--hemoprotein reductase] + O2 = (11R,12S)-epoxy-(5Z,8Z,14Z)-eicosatrienoate + oxidized [NADPH--hemoprotein reductase] + H2O + H(+). It carries out the reaction (5Z,8Z,11Z,14Z)-eicosatetraenoate + reduced [NADPH--hemoprotein reductase] + O2 = (14S,15R)-epoxy-(5Z,8Z,11Z)-eicosatrienoate + oxidized [NADPH--hemoprotein reductase] + H2O + H(+). The enzyme catalyses (5Z,8Z,11Z,14Z)-eicosatetraenoate + reduced [NADPH--hemoprotein reductase] + O2 = (14R,15S)-epoxy-(5Z,8Z,11Z)-eicosatrienoate + oxidized [NADPH--hemoprotein reductase] + H2O + H(+). It catalyses the reaction (5Z,8Z,11Z,14Z,17Z)-eicosapentaenoate + reduced [NADPH--hemoprotein reductase] + O2 = (17R,18S)-epoxy-(5Z,8Z,11Z,14Z)-eicosatetraenoate + oxidized [NADPH--hemoprotein reductase] + H2O + H(+). The catalysed reaction is (4Z,7Z,10Z,13Z,16Z,19Z)-docosahexaenoate + reduced [NADPH--hemoprotein reductase] + O2 = (19S,20R)-epoxy-(4Z,7Z,10Z,13Z,16Z)-docosapentaenoate + oxidized [NADPH--hemoprotein reductase] + H2O + H(+). It carries out the reaction (4Z,7Z,10Z,13Z,16Z,19Z)-docosahexaenoate + reduced [NADPH--hemoprotein reductase] + O2 = (19R,20S)-epoxy-(4Z,7Z,10Z,13Z,16Z)-docosapentaenoate + oxidized [NADPH--hemoprotein reductase] + H2O + H(+). The enzyme catalyses all-trans-retinol + reduced [NADPH--hemoprotein reductase] + O2 = all-trans-retinal + oxidized [NADPH--hemoprotein reductase] + 2 H2O + H(+). It catalyses the reaction all-trans-retinal + reduced [NADPH--hemoprotein reductase] + O2 = all-trans-retinoate + oxidized [NADPH--hemoprotein reductase] + H2O + 2 H(+). The catalysed reaction is (13S)-hydroperoxy-(9Z,11E)-octadecadienoate = 13-oxo-(9Z,11E)-octadecadienoate + H2O. It carries out the reaction (12S)-hydroperoxy-(5Z,8Z,10E,14Z)-eicosatetraenoate = 12-oxo-(5Z,8Z,10E,14Z)-eicosatetraenoate + H2O. The enzyme catalyses (15S)-hydroperoxy-(5Z,8Z,11Z,13E)-eicosatetraenoate = 15-oxo-(5Z,8Z,11Z,13E)-eicosatetraenoate + H2O. It catalyses the reaction (5S)-hydroperoxy-(6E,8Z,11Z,14Z)-eicosatetraenoate = 5-oxo-(6E,8Z,11Z,14Z)-eicosatetraenoate + H2O. The protein operates within steroid hormone biosynthesis. It functions in the pathway lipid metabolism; fatty acid metabolism. It participates in cofactor metabolism; retinol metabolism. Functionally, a cytochrome P450 monooxygenase involved in the metabolism of various endogenous substrates, including fatty acids, steroid hormones and vitamins. Mechanistically, uses molecular oxygen inserting one oxygen atom into a substrate, and reducing the second into a water molecule, with two electrons provided by NADPH via cytochrome P450 reductase (CPR; NADPH-ferrihemoprotein reductase). Catalyzes the hydroxylation of carbon-hydrogen bonds. Exhibits high catalytic activity for the formation of hydroxyestrogens from estrone (E1) and 17beta-estradiol (E2), namely 2-hydroxy E1 and E2, as well as D-ring hydroxylated E1 and E2 at the C15alpha and C16alpha positions. Displays different regioselectivities for polyunsaturated fatty acids (PUFA) hydroxylation. Catalyzes the epoxidation of double bonds of certain PUFA. Converts arachidonic acid toward epoxyeicosatrienoic acid (EET) regioisomers, 8,9-, 11,12-, and 14,15-EET, that function as lipid mediators in the vascular system. Displays an absolute stereoselectivity in the epoxidation of eicosapentaenoic acid (EPA) producing the 17(R),18(S) enantiomer. May play an important role in all-trans retinoic acid biosynthesis in extrahepatic tissues. Catalyzes two successive oxidative transformation of all-trans retinol to all-trans retinal and then to the active form all-trans retinoic acid. May also participate in eicosanoids metabolism by converting hydroperoxide species into oxo metabolites (lipoxygenase-like reaction, NADPH-independent). The polypeptide is Cytochrome P450 1A1 (CYP1A1) (Balaenoptera acutorostrata (Common minke whale)).